A 103-amino-acid chain; its full sequence is uncharacterized protein (103 aa).

This is an uncharacterized protein from Bacillus subtilis (strain 168).